A 427-amino-acid chain; its full sequence is 3-phosphoshikimate 1-carboxyvinyltransferase (427 aa).

The 3-phosphoshikimate site is built by Lys20, Ser21, and Arg25. Residue Lys20 coordinates phosphoenolpyruvate. Positions 92 and 120 each coordinate phosphoenolpyruvate. 4 residues coordinate 3-phosphoshikimate: Ser166, Gln168, Asp312, and Lys339. Position 168 (Gln168) interacts with phosphoenolpyruvate. Asp312 functions as the Proton acceptor in the catalytic mechanism. Residues Arg343 and Arg385 each contribute to the phosphoenolpyruvate site.

This sequence belongs to the EPSP synthase family. Monomer.

It localises to the cytoplasm. It catalyses the reaction 3-phosphoshikimate + phosphoenolpyruvate = 5-O-(1-carboxyvinyl)-3-phosphoshikimate + phosphate. The protein operates within metabolic intermediate biosynthesis; chorismate biosynthesis; chorismate from D-erythrose 4-phosphate and phosphoenolpyruvate: step 6/7. Its function is as follows. Catalyzes the transfer of the enolpyruvyl moiety of phosphoenolpyruvate (PEP) to the 5-hydroxyl of shikimate-3-phosphate (S3P) to produce enolpyruvyl shikimate-3-phosphate and inorganic phosphate. The protein is 3-phosphoshikimate 1-carboxyvinyltransferase of Streptococcus gordonii (strain Challis / ATCC 35105 / BCRC 15272 / CH1 / DL1 / V288).